Consider the following 94-residue polypeptide: Small ribosomal subunit protein uS19 (94 aa).

The protein belongs to the universal ribosomal protein uS19 family.

Protein S19 forms a complex with S13 that binds strongly to the 16S ribosomal RNA. The polypeptide is Small ribosomal subunit protein uS19 (Clostridium botulinum (strain Langeland / NCTC 10281 / Type F)).